The following is a 554-amino-acid chain: Dihydroxy-acid dehydratase (554 aa).

Residue Asp78 participates in Mg(2+) binding. Cys119 serves as a coordination point for [2Fe-2S] cluster. Asp120 and Lys121 together coordinate Mg(2+). Residue Lys121 is modified to N6-carboxylysine. [2Fe-2S] cluster is bound at residue Cys191. Glu442 contacts Mg(2+). The Proton acceptor role is filled by Ser468.

This sequence belongs to the IlvD/Edd family. In terms of assembly, homodimer. It depends on [2Fe-2S] cluster as a cofactor. Mg(2+) serves as cofactor.

It catalyses the reaction (2R)-2,3-dihydroxy-3-methylbutanoate = 3-methyl-2-oxobutanoate + H2O. It carries out the reaction (2R,3R)-2,3-dihydroxy-3-methylpentanoate = (S)-3-methyl-2-oxopentanoate + H2O. It participates in amino-acid biosynthesis; L-isoleucine biosynthesis; L-isoleucine from 2-oxobutanoate: step 3/4. It functions in the pathway amino-acid biosynthesis; L-valine biosynthesis; L-valine from pyruvate: step 3/4. Functions in the biosynthesis of branched-chain amino acids. Catalyzes the dehydration of (2R,3R)-2,3-dihydroxy-3-methylpentanoate (2,3-dihydroxy-3-methylvalerate) into 2-oxo-3-methylpentanoate (2-oxo-3-methylvalerate) and of (2R)-2,3-dihydroxy-3-methylbutanoate (2,3-dihydroxyisovalerate) into 2-oxo-3-methylbutanoate (2-oxoisovalerate), the penultimate precursor to L-isoleucine and L-valine, respectively. The polypeptide is Dihydroxy-acid dehydratase (Hydrogenobaculum sp. (strain Y04AAS1)).